The primary structure comprises 156 residues: MTIYFYKVWQPYGCFSNFSPHGIHIQDTYWATVEHYYQAQKFVGSKDAAIIPLIHAAATPEEAAALGRCSTRQLRRDWDLVKTQIMREAVLKKFLTHADIREVLLKTGDELLVENSPTDSFWGCGANKAGLNHLGKTLMSVREEIRNLLSLTGIYE.

This sequence belongs to the YbiA family.

The catalysed reaction is 2,5-diamino-6-hydroxy-4-(5-phosphoribosylamino)-pyrimidine + H2O = 2,5,6-triamino-4-hydroxypyrimidine + D-ribose 5-phosphate. It catalyses the reaction 5-amino-6-(5-phospho-D-ribosylamino)uracil + H2O = 5,6-diaminouracil + D-ribose 5-phosphate. In terms of biological role, catalyzes the hydrolysis of the N-glycosidic bond in the first two intermediates of riboflavin biosynthesis, which are highly reactive metabolites, yielding relatively innocuous products. Thus, can divert a surplus of harmful intermediates into relatively harmless products and pre-empt the damage these intermediates would otherwise do. May act on other substrates in vivo. Has no activity against GTP, nucleoside monophosphates or ADP-ribose. This is N-glycosidase Npun_R5314 from Nostoc punctiforme (strain ATCC 29133 / PCC 73102).